The primary structure comprises 811 residues: DNA gyrase subunit A (811 aa).

Residues 30–493 form the Topo IIA-type catalytic domain; it reads LPDVRDGLKP…LEEDIGKEDL (464 aa). Tyrosine 118 functions as the O-(5'-phospho-DNA)-tyrosine intermediate in the catalytic mechanism. Positions 520–526 match the GyrA-box motif; sequence QGRGGRG.

This sequence belongs to the type II topoisomerase GyrA/ParC subunit family. Heterotetramer, composed of two GyrA and two GyrB chains. In the heterotetramer, GyrA contains the active site tyrosine that forms a transient covalent intermediate with DNA, while GyrB binds cofactors and catalyzes ATP hydrolysis.

It is found in the cytoplasm. The enzyme catalyses ATP-dependent breakage, passage and rejoining of double-stranded DNA.. A type II topoisomerase that negatively supercoils closed circular double-stranded (ds) DNA in an ATP-dependent manner to modulate DNA topology and maintain chromosomes in an underwound state. Negative supercoiling favors strand separation, and DNA replication, transcription, recombination and repair, all of which involve strand separation. Also able to catalyze the interconversion of other topological isomers of dsDNA rings, including catenanes and knotted rings. Type II topoisomerases break and join 2 DNA strands simultaneously in an ATP-dependent manner. The chain is DNA gyrase subunit A from Deinococcus deserti (strain DSM 17065 / CIP 109153 / LMG 22923 / VCD115).